Consider the following 31-residue polypeptide: Cyclotide hyen-J (31 aa).

The segment at residues 1 to 31 is a cross-link (cyclopeptide (Gly-Asp)); it reads GSVPCGESCVWIPCITSIAGCSCSNKVCYMD. 3 disulfide bridges follow: Cys5–Cys21, Cys9–Cys23, and Cys14–Cys28.

In terms of processing, this is a cyclic peptide. In terms of tissue distribution, detected in seeds (at protein level).

Its function is as follows. Probably participates in a plant defense mechanism. This chain is Cyclotide hyen-J, found in Pigea enneasperma (Spade flower).